The sequence spans 518 residues: GMP synthase [glutamine-hydrolyzing] (518 aa).

A Glutamine amidotransferase type-1 domain is found at 13–203; sequence KIIVLDFGSQ…ALNVCGCKGD (191 aa). The active-site Nucleophile is the Cys90. Catalysis depends on residues His177 and Glu179. The 190-residue stretch at 204–393 folds into the GMPS ATP-PPase domain; sequence WTMENFSEVE…LGMPDAIVWR (190 aa). Residue 231–237 coordinates ATP; sequence SGGVDSS.

Homodimer.

The enzyme catalyses XMP + L-glutamine + ATP + H2O = GMP + L-glutamate + AMP + diphosphate + 2 H(+). Its pathway is purine metabolism; GMP biosynthesis; GMP from XMP (L-Gln route): step 1/1. Catalyzes the synthesis of GMP from XMP. This chain is GMP synthase [glutamine-hydrolyzing], found in Listeria monocytogenes serovar 1/2a (strain ATCC BAA-679 / EGD-e).